A 462-amino-acid polypeptide reads, in one-letter code: MVEIRLTNTRTRRKEVFRPIDPQNVRLYLCGPTVYDRAHLGNARPVVVIDVLVRLLRHLLGADHVTYVRNFTDVDDKINATALARKEAGTPGTLEELIRERTHETIGWYHADMDALGAERPDHEPRATDYIGEMIAMIETLIAGGHAYARDGHVLFRVRSYADYGKLSGRSVDDMIAGARVEVAPFKEDPMDFVLWKPSDDELPGWDSPWGRGRPGWHIECSAMSYELLGESFDIHAGGIDLQFPHHENEIAQSCCAHPHGDFARVWLHNEMLQVEGRKMSKSLGNFFTVRDLLDQGIPGEVIRFVLLSTHYRKPMDWTAEKAREAEAVLRRWRGLVAGVEPAPGPAPAVVAALADDLNTAGAIAALHEMAGQGDGPGLLAGARMLGLLTEDLGGWIAEGPDLSALTERMAALRADAKASKDFSAVDALKQRLLDAGVEVRMSAAGVELLPGPDFDAAKLPE.

Position 30 (C30) interacts with Zn(2+). The 'HIGH' region signature appears at 32 to 42 (PTVYDRAHLGN). 3 residues coordinate Zn(2+): C221, H246, and E250. A 'KMSKS' region motif is present at residues 279–283 (KMSKS). Position 282 (K282) interacts with ATP.

The protein belongs to the class-I aminoacyl-tRNA synthetase family. Monomer. It depends on Zn(2+) as a cofactor.

The protein localises to the cytoplasm. The enzyme catalyses tRNA(Cys) + L-cysteine + ATP = L-cysteinyl-tRNA(Cys) + AMP + diphosphate. This chain is Cysteine--tRNA ligase, found in Paracoccus denitrificans (strain Pd 1222).